We begin with the raw amino-acid sequence, 154 residues long: D-aminoacyl-tRNA deacylase (154 aa).

The Gly-cisPro motif, important for rejection of L-amino acids signature appears at 142–143 (GP).

Belongs to the DTD family. In terms of assembly, homodimer.

It localises to the cytoplasm. The enzyme catalyses glycyl-tRNA(Ala) + H2O = tRNA(Ala) + glycine + H(+). The catalysed reaction is a D-aminoacyl-tRNA + H2O = a tRNA + a D-alpha-amino acid + H(+). An aminoacyl-tRNA editing enzyme that deacylates mischarged D-aminoacyl-tRNAs. Also deacylates mischarged glycyl-tRNA(Ala), protecting cells against glycine mischarging by AlaRS. Acts via tRNA-based rather than protein-based catalysis; rejects L-amino acids rather than detecting D-amino acids in the active site. By recycling D-aminoacyl-tRNA to D-amino acids and free tRNA molecules, this enzyme counteracts the toxicity associated with the formation of D-aminoacyl-tRNA entities in vivo and helps enforce protein L-homochirality. This chain is D-aminoacyl-tRNA deacylase, found in Polaromonas naphthalenivorans (strain CJ2).